Consider the following 225-residue polypeptide: uncharacterized protein (225 aa).

This is an uncharacterized protein from Schizosaccharomyces pombe (strain 972 / ATCC 24843) (Fission yeast).